The chain runs to 554 residues: U4/U6 small nuclear ribonucleoprotein PRP4-like protein (554 aa).

Positions Ala48 to Arg65 are enriched in pro residues. Positions Ala48–Glu99 are disordered. The span at Ile88–Glu99 shows a compositional bias: basic and acidic residues. WD repeat units follow at residues Gly253–Ala292, Asp296–Phe335, Gly337–Leu376, Gly379–Val418, Gly421–Ile460, Ala463–Ser503, and Gly506–Glu545.

It is found in the nucleus speckle. In terms of biological role, participates in pre-mRNA splicing. Part of the U4/U5/U6 tri-snRNP complex, one of the building blocks of the spliceosome. Essential for reproduction. In female gametophyte, is necessary for the egg cell and central cell fate determination and hence reproductive success. Involved in a mechanism that prevents accessory cells from adopting gametic cell fate. Modulates egg cell signaling center that regulates the development of all female gametophytic cells. In Arabidopsis thaliana (Mouse-ear cress), this protein is U4/U6 small nuclear ribonucleoprotein PRP4-like protein.